A 433-amino-acid polypeptide reads, in one-letter code: Protein MTH1 (433 aa).

The segment at 1–117 is disordered; that stretch reads MFVSPPPATS…SRRSSVAESG (117 aa). Residues 9-47 show a composition bias toward polar residues; that stretch reads TSKNQVLQRRPLESTNSNHGFASSLQAIPENTMSGSDNA. Residues 48-64 are compositionally biased toward low complexity; it reads SFQSLPLSMSSSQSTTS. The span at 77 to 87 shows a compositional bias: basic and acidic residues; the sequence is YTDRARDEIKK.

To yeast STD1/MSN3.

The protein is Protein MTH1 (MTH1) of Saccharomyces cerevisiae (strain ATCC 204508 / S288c) (Baker's yeast).